The following is an 877-amino-acid chain: Potassium transporter 23 (877 aa).

Disordered regions lie at residues 1 to 60 (MDDD…SLDG) and 72 to 92 (ASAG…RASS). At 1-126 (MDDDDSGIQE…RGAHGHSSKE (126 aa)) the chain is on the cytoplasmic side. Pro residues predominate over residues 12 to 28 (PAPPPPPPPPPPPPPPL). A compositionally biased stretch (gly residues) spans 76–86 (GASGGGGGGGP). The helical transmembrane segment at 127-147 (ISMLSTVAMAFQTLGVVYGDM) threads the bilayer. Residues 148–173 (GTSPLYVFSDVFSKVPIKSEVEILGA) lie on the Extracellular side of the membrane. A helical transmembrane segment spans residues 174-194 (LSLVMYTIALIPFAKYVFIVL). The Cytoplasmic segment spans residues 195 to 260 (KANDNGEGGT…SLEKNPVFKN (66 aa)). A helical transmembrane segment spans residues 261-281 (ILLFLVLMGTSMVIGDGILTP). Residues 282–295 (SMSVMSAVSGLQGR) are Extracellular-facing. The chain crosses the membrane as a helical span at residues 296-316 (VPGFGTDAVVIVSILFLVLLF). At 317–325 (SVQRFGTGK) the chain is on the cytoplasmic side. The helical transmembrane segment at 326 to 346 (VGFMFAPILALWFINLGTIGI) threads the bilayer. Over 347–379 (YNLAKYDISVVRAFNPVYIYLFFQTNGIKAWSA) the chain is Extracellular. The helical transmembrane segment at 380–400 (LGGCVLCITGAEAMFADLGHF) threads the bilayer. Residues 401–406 (SVKSIQ) are Cytoplasmic-facing. A helical membrane pass occupies residues 407–427 (VAFTAVVFPCLLIAYMGQAAY). Over 428 to 441 (LMKYPFAVERIFYD) the chain is Extracellular. A helical membrane pass occupies residues 442–462 (SVPEILFWPVFVIATLAAMIA). Topologically, residues 463 to 498 (SQAMISATFSCIKQAMALGCFPRIKIIHTSKKVMGQ) are cytoplasmic. A helical membrane pass occupies residues 499–519 (IYIPVMNWFLMVMCIIIVATF). The Extracellular segment spans residues 520–524 (RSTND). A helical membrane pass occupies residues 525-545 (IANAYGIAEVGVMMVSTALVT). The Cytoplasmic segment spans residues 546 to 555 (LVMLLIWQTN). A helical transmembrane segment spans residues 556–578 (LFLVMCFPVIFGSVEFVYLTAVL). Residues 579–583 (SKIQE) lie on the Extracellular side of the membrane. Residues 584-604 (GGWLPLAFSSLFLCIMYTWNY) traverse the membrane as a helical segment. At 605–877 (GSVLKYQSEM…IMRVGMTYMV (273 aa)) the chain is on the cytoplasmic side.

Belongs to the HAK/KUP transporter (TC 2.A.72.3) family.

Its subcellular location is the membrane. Functionally, high-affinity potassium transporter. The chain is Potassium transporter 23 (HAK23) from Oryza sativa subsp. japonica (Rice).